The chain runs to 466 residues: Histidine--tRNA ligase (466 aa).

This sequence belongs to the class-II aminoacyl-tRNA synthetase family. As to quaternary structure, homodimer.

The protein localises to the cytoplasm. It carries out the reaction tRNA(His) + L-histidine + ATP = L-histidyl-tRNA(His) + AMP + diphosphate + H(+). The polypeptide is Histidine--tRNA ligase (Bifidobacterium animalis subsp. lactis (strain AD011)).